A 354-amino-acid polypeptide reads, in one-letter code: Histidinol-phosphate aminotransferase (354 aa).

Residue K208 is modified to N6-(pyridoxal phosphate)lysine.

Belongs to the class-II pyridoxal-phosphate-dependent aminotransferase family. Histidinol-phosphate aminotransferase subfamily. Homodimer. It depends on pyridoxal 5'-phosphate as a cofactor.

The enzyme catalyses L-histidinol phosphate + 2-oxoglutarate = 3-(imidazol-4-yl)-2-oxopropyl phosphate + L-glutamate. It participates in amino-acid biosynthesis; L-histidine biosynthesis; L-histidine from 5-phospho-alpha-D-ribose 1-diphosphate: step 7/9. This Aquifex aeolicus (strain VF5) protein is Histidinol-phosphate aminotransferase.